The following is a 293-amino-acid chain: Pseudouridine-5'-phosphate glycosidase (293 aa).

Catalysis depends on glutamate 21, which acts as the Proton donor. Residues lysine 81 and valine 101 each contribute to the substrate site. Aspartate 130 is a binding site for Mn(2+). 132-134 is a substrate binding site; sequence SQD. The active-site Nucleophile is the lysine 151.

This sequence belongs to the pseudouridine-5'-phosphate glycosidase family. Homotrimer. The cofactor is Mn(2+).

The catalysed reaction is D-ribose 5-phosphate + uracil = psi-UMP + H2O. Its function is as follows. Catalyzes the reversible cleavage of pseudouridine 5'-phosphate (PsiMP) to ribose 5-phosphate and uracil. Functions biologically in the cleavage direction, as part of a pseudouridine degradation pathway. The chain is Pseudouridine-5'-phosphate glycosidase from Thermosipho africanus (strain TCF52B).